The chain runs to 118 residues: Large ribosomal subunit protein bL20 (118 aa).

The protein belongs to the bacterial ribosomal protein bL20 family.

Functionally, binds directly to 23S ribosomal RNA and is necessary for the in vitro assembly process of the 50S ribosomal subunit. It is not involved in the protein synthesizing functions of that subunit. The polypeptide is Large ribosomal subunit protein bL20 (Cupriavidus metallidurans (strain ATCC 43123 / DSM 2839 / NBRC 102507 / CH34) (Ralstonia metallidurans)).